Reading from the N-terminus, the 550-residue chain is MMPRAQLTTFLIVTSFLSTVPYLRAPVHGGVLTSYDVSSLDIMSKIHTDHDATTKASSDFGHIVHATPNGVFRPTFPADIAALIRLSLSQPTPFTVAPRGKGHSSRGQAFAPGGIVVDMSALGDHGHHTSHRIDVSVDRMYVDAGGEQLWIDVLHTALKHGLTPRVWTDYLRITVGGTLSNAGIGGQAFRHGPQISNVHELDVVTGMGEMITCSPEVNSALFFAVLGGLGQFGVITRARIRLEPAPKRVKWVRIAYSDVHPFTTDQELLISKWASGSGFDYVEGQVQLNRTLTQGRRSSSFFSATDLARLTGLAIDTGSVAIYYIEGAMYYDDNTAASVDQKLDALLEELSFVRGFVFVRDASYVEFLDRVGREEQNLRSAGAWDVPHPWLNLFVPRSRILHFDAAVFKGILRNANPVGLILMYPMNKDMWDDRMTAMTPDEDVFYAVGLLRSAVAGGSGGDVEQLERENAAVLELCDLAGGGIGCRQYLPHHASRDGWRRHFGAKWGRVADLKARYDPRAILSPGQGIFPPPPPPSPPPPAAGEPITAS.

Residues M1–P26 form the signal peptide. In terms of domain architecture, FAD-binding PCMH-type spans V64 to A245. The FAD site is built by G100, K101, and G102. Position 103 is a pros-8alpha-FAD histidine (H103). Residues S104, Q108, D169, T174, S180, I184, and I235 each contribute to the FAD site. A glycan (N-linked (GlcNAc...) asparagine) is linked at N289. Residues Y489, S524, and Q527 each contribute to the FAD site. The segment at L523–S550 is disordered. Positions F530–A543 are enriched in pro residues.

It belongs to the oxygen-dependent FAD-linked oxidoreductase family. As to quaternary structure, monomer. It depends on FAD as a cofactor.

Its subcellular location is the secreted. It is found in the extracellular space. It carries out the reaction N(6)-dimethylallyladenine + A + H2O = 3-methyl-2-butenal + adenine + AH2. In terms of biological role, catalyzes the oxidation of cytokinins, a family of N(6)-substituted adenine derivatives that are plant hormones, where the substituent is an isopentenyl group. The sequence is that of Cytokinin dehydrogenase 10 (CKX10) from Oryza sativa subsp. japonica (Rice).